The following is a 274-amino-acid chain: Large ribosomal subunit protein uL2 (274 aa).

2 disordered regions span residues 28–54 (APYAPLLEKNSKSGGRNNNGRITTRHI) and 223–265 (VAMN…KRTD). Over residues 39–48 (KSGGRNNNGR) the composition is skewed to low complexity.

It belongs to the universal ribosomal protein uL2 family. In terms of assembly, part of the 50S ribosomal subunit. Forms a bridge to the 30S subunit in the 70S ribosome.

Its function is as follows. One of the primary rRNA binding proteins. Required for association of the 30S and 50S subunits to form the 70S ribosome, for tRNA binding and peptide bond formation. It has been suggested to have peptidyltransferase activity; this is somewhat controversial. Makes several contacts with the 16S rRNA in the 70S ribosome. This Alteromonas mediterranea (strain DSM 17117 / CIP 110805 / LMG 28347 / Deep ecotype) protein is Large ribosomal subunit protein uL2.